A 660-amino-acid chain; its full sequence is Pro-secreted protein ORF2 (660 aa).

The first 23 residues, 1–23, serve as a signal peptide directing secretion; it reads MRPRAVLLLLFVLLPMLPAPPAG. Disordered regions lie at residues 19 to 43 and 64 to 125; these read APPA…GFWG and ADVV…VPDV. The Nuclear localization signal signature appears at 28 to 33; that stretch reads RRRGRR. The span at 93 to 124 shows a compositional bias: low complexity; the sequence is RPSAAPRRRSAPAGAAPLTAVSPAPDTAPVPD. 2 N-linked (GlcNAc...) asparagine; by host glycosylation sites follow: asparagine 137 and asparagine 310. The segment at 368–394 is particle formation; the sequence is IALTLFNLADTLLGGLPTELISSAGGQ. A glycan (N-linked (GlcNAc...) asparagine; by host) is linked at asparagine 562. Residues 585 to 610 form an oligomerization region; sequence TTSLGAGPTSISAVGVLAPHSALAVL.

Belongs to the hepevirus capsid protein family. In terms of assembly, homodimer. Self-assembles to form the capsid. The capsid is dominated by dimers that define the 30 morphological units. Interacts with phosphorylated protein ORF3. Interacts with host TMEM134. Interacts with host ASGR1 and ASGR2; these interactions facilitate infection of host hepatocytes. In terms of processing, cleaved by host protease in the N-terminus. Post-translationally, N-glycosylated. Not N-glycosylated. The C-terminus of the capsid protein ORF2 is truncated in non-enveloped virions shedded in feces, probably due to host proteases.

It is found in the secreted. The protein localises to the virion. The protein resides in the host cytoplasm. Its subcellular location is the host endoplasmic reticulum. It localises to the host Golgi apparatus. It is found in the host cell surface. The protein localises to the host nucleus. Plays a role in the inhibition of host antibody-mediated neutralization without blocking viral cell entry. Functionally, forms an icosahedral capsid with a T=1 symmetry and a 34 nm diameter. The capsid is composed of 60 copies linked to each other. Binds to the 5' end of the genomic RNA to mediate genome encapsidation. Binds to heparin surface proteoglycans (HSPGs) to mediate viral entry. Additionally, the interactions with host ASGR1 and ASGR2 facilitate viral infection of hepatocytes. Inhibits IFN production by blocking host TBK1-induced IRF3 phosphorylation. The nuclear form probably modulates host gene expression. This chain is Pro-secreted protein ORF2, found in Hepatitis E virus genotype 3 (isolate Human/United States/US2) (HEV-3).